A 469-amino-acid polypeptide reads, in one-letter code: GDP-fucose protein O-fucosyltransferase 3 (469 aa).

The Cytoplasmic segment spans residues 1–9; it reads MVNRIWEKR. The chain crosses the membrane as a helical; Signal-anchor for type II membrane protein span at residues 10-30; that stretch reads FWISCFFIIFLFILVIFQVMV. The Lumenal portion of the chain corresponds to 31–469; it reads ELGRFEKKET…EFWNLVFKFW (439 aa). N-linked (GlcNAc...) asparagine glycans are attached at residues Asn100, Asn158, Asn308, and Asn333. The cysteines at positions 379 and 382 are disulfide-linked. A glycan (N-linked (GlcNAc...) asparagine) is linked at Asn455.

This sequence belongs to the glycosyltransferase 10 family.

It localises to the endoplasmic reticulum membrane. The enzyme catalyses L-threonyl-[protein] + GDP-beta-L-fucose = 3-O-(alpha-L-fucosyl)-L-threonyl-[protein] + GDP + H(+). It carries out the reaction L-seryl-[protein] + GDP-beta-L-fucose = 3-O-(alpha-L-fucosyl)-L-seryl-[protein] + GDP + H(+). Its pathway is protein modification; protein glycosylation. Functionally, protein O-fucosyltransferase that specifically catalyzes O-fucosylation of serine or threonine residues in EMI domains of target proteins. Attaches fucose through an O-glycosidic linkage. O-fucosylation of EMI domain-containing proteins may be required for facilitating protein folding and secretion. The protein is GDP-fucose protein O-fucosyltransferase 3 (fut10) of Xenopus laevis (African clawed frog).